The following is a 197-amino-acid chain: Probable GTP-binding protein EngB (197 aa).

Residues 25-197 enclose the EngB-type G domain; sequence SAPEIAFAGR…VRDEFFKFTR (173 aa). GTP-binding positions include 33–40, 60–64, 79–82, 146–149, and 177–179; these read GRSNVGKS, GCTRQ, DLPG, TKID, and ISV. The Mg(2+) site is built by Ser-40 and Thr-62.

The protein belongs to the TRAFAC class TrmE-Era-EngA-EngB-Septin-like GTPase superfamily. EngB GTPase family. Mg(2+) serves as cofactor.

Necessary for normal cell division and for the maintenance of normal septation. This is Probable GTP-binding protein EngB from Wolbachia sp. subsp. Brugia malayi (strain TRS).